Consider the following 681-residue polypeptide: MADPVAGIAGSAAKSVRPFRSSEAYVEAMKEDLAEWLNALYGLGLPGGGDGFLTGLATGTTLCQHANAVTEAARALAAARPARGVAFQAHSVVPGSFMARDNVATFIGWCRVELGVPEVLMFETEDLVLRKNEKSVVLCLLEVARRGARLGLLAPRLVQFEQEIERELRAAPPAPNAPAAGEDTTETAPAPGTPARGPRMTPSDLRNLDELVREILGRCTCPDQFPMIKVSEGKYRVGDSSLLIFVRVLRSHVMVRVGGGWDTLEHYLDKHDPCRCSSTAHRPPQPRVCTFSPQRVSPTTSPRPASPVPGSERRGSRPEMTPVSLRSTKEGPETPPRPRDQLPPHPRSRRYSGDSDSSASSAQSGPLGTRSDDTGTGPRRERPSRRLTTGTPASPRRPPALRSQSRDRLDRGRPRGAPGGRGAQLSVPSPARRARSQSREEQAVLLVRRDRDGQHSWVPRGRGSGGSGRSTPQTPRARSPAAPRLSRVSSPSPELGTTPASIFRTPLQLDPQQEQQLFRRLEEEFLANARALEAVASVTPTGPVPDPARAPDPPAPDSAYCSSSSSSSSLSVLGGKCGQPGDSGRTANGLPGPRSQALSSSSDEGSPCPGMGGPLDAPGSPLACTEPSRTWARGRMDTQPDRKPSRIPTPRGPRRPSGPAELGTWHALHSVTPRAEPDSWM.

Ala2 bears the N-acetylalanine mark. The Calponin-homology (CH) domain maps to 27 to 148 (EAMKEDLAEW…CLLEVARRGA (122 aa)). 3 disordered regions span residues 168-204 (LRAAPPAPNAPAAGEDTTETAPAPGTPARGPRMTPSD), 278-509 (STAH…PLQL), and 536-681 (ASVT…DSWM). Residues 186 to 199 (ETAPAPGTPARGPR) are compositionally biased toward low complexity. Thr193 is subject to Phosphothreonine. In terms of domain architecture, GAR spans 203–275 (SDLRNLDELV…HYLDKHDPCR (73 aa)). Residues 291–303 (FSPQRVSPTTSPR) are compositionally biased toward polar residues. Residues Ser306 and Ser316 each carry the phosphoserine modification. Over residues 327–342 (STKEGPETPPRPRDQL) the composition is skewed to basic and acidic residues. Thr334 is subject to Phosphothreonine. Phosphoserine is present on residues Ser352 and Ser355. A compositionally biased stretch (low complexity) spans 354 to 365 (DSDSSASSAQSG). The segment covering 370–381 (RSDDTGTGPRRE) has biased composition (basic and acidic residues). Thr391 is modified (phosphothreonine). Phosphoserine is present on Ser394. Residues 404–413 (QSRDRLDRGR) show a composition bias toward basic and acidic residues. 4 positions are modified to phosphoserine: Ser436, Ser438, Ser479, and Ser486. The span at 437-454 (QSREEQAVLLVRRDRDGQ) shows a compositional bias: basic and acidic residues. Positions 475–493 (PRARSPAAPRLSRVSSPSP) are enriched in low complexity. Arg487 carries the omega-N-methylarginine modification. Phosphoserine is present on residues Ser490 and Ser492. At Thr498 the chain carries Phosphothreonine. Arg504 bears the Omega-N-methylarginine mark. A compositionally biased stretch (pro residues) spans 542–556 (GPVPDPARAPDPPAP). The segment covering 557–571 (DSAYCSSSSSSSSLS) has biased composition (low complexity). At Arg633 the chain carries Omega-N-methylarginine. Basic and acidic residues predominate over residues 634-644 (GRMDTQPDRKP). At Ser657 the chain carries Phosphoserine.

The protein belongs to the GAS2 family. In terms of assembly, interacts with MAPRE1.

It is found in the cytoplasm. Its subcellular location is the cytoskeleton. The protein localises to the stress fiber. In terms of biological role, involved in the cross-linking of microtubules and microfilaments. Regulates microtubule dynamics and stability by interacting with microtubule plus-end tracking proteins, such as MAPRE1, to regulate microtubule growth along actin stress fibers. The protein is GAS2-like protein 1 (GAS2L1) of Homo sapiens (Human).